We begin with the raw amino-acid sequence, 405 residues long: MTTFDHPSMIRQPKPTGLAGGLVLAALMLSSSLALADATPNQLGSEITAKLQDETSIAIAPASDSKRVYVLDPGNFHMTSTVYTIDGKSSKLLGMTDAGKLPNVMVASDGKFLAIANTMYSRVARGKRDDYLELIDTKTHQPIADIDIPEGRFLTGVFERTAGLSVDDKHLLFQQFSPSPGVGLVDLQQKAFVKIMNVPDCYHIFPTANQNFFMHCRDGSLMQFTYDSKGNTKQKPTKIFHAEKEYLLNNPYYSNSNNHLTWPTYEGKIFQAKLSESGAEFLKPIEVFTDKEKADKWRPGGWQTIAFHKARNELYLLADQREKWTHKLPSRFVFVVDATSGKRLRRIELKHEINSIAVSQDDKPYLYAVSEEAKTLFTFDAVNGKALSSIDELGRAPSMIFIADK.

Positions 1–36 (MTTFDHPSMIRQPKPTGLAGGLVLAALMLSSSLALA) are cleaved as a signal peptide.

Belongs to the aromatic amine dehydrogenase heavy chain family. Tetramer of two light and two heavy chains.

It is found in the periplasm. It carries out the reaction 2 oxidized [amicyanin] + methylamine + H2O = 2 reduced [amicyanin] + formaldehyde + NH4(+) + 2 H(+). In terms of biological role, methylamine dehydrogenase carries out the oxidation of methylamine. Electrons are passed from methylamine dehydrogenase to amicyanin. The sequence is that of Methylamine dehydrogenase heavy chain (mauB) from Methylophilus methylotrophus (Bacterium W3A1).